Here is a 538-residue protein sequence, read N- to C-terminus: MKWLKGIGLALIPFNLHDYPIALTLGCYLLSCAVIFYTDRFALPARERRKNAPKYGRNRDRIDRLARLPVIALVFAGFFAISWRPLYAAAGTMSFFIIFTGISRAKFKFIREPLVFSDIALVADVFKYKTIFYASSLNIVFWIVAFLYVFGVSALYMYFEPTILPERSRLFWVLVMVGIAAGPWGLLFYGPVNRPTAALVQRLVKAINVKMNTVRFGTFASVVFHFIIWLGVKRDKIVAELSEILRAAVHDLIGHEEAPLIIVWQSESFIDMRHFGVDSIKLPTVDRLRKQAVQWGRLSNVFEGGYTLRTEFAVLSGLVPDDIHVDASYPYLRAAHYADIVWPGKLKRAGWRTHFIHPYDRTFFLRHKAMPLLGFEKLTMLDAFDHKPERDGLYVSDATLAARVLAEVEKLPEEESGFFFVASMANHGPWEPGRVGTLTNPVDIYLAILEQSDAALKQLIDGLNKLDRPVWFVFYGDHAPLLKSFADPFPDPRTDYFIVPLAKARAAAHSPKRAKDEDPWNLLGSMLKHANLHKDALQ.

6 helical membrane-spanning segments follow: residues 16 to 36, 70 to 90, 114 to 134, 139 to 159, 170 to 190, and 212 to 232; these read LHDY…AVIF, VIAL…YAAA, LVFS…IFYA, IVFW…YMYF, LFWV…LFYG, and NTVR…WLGV.

The protein localises to the cell membrane. Its pathway is capsule biogenesis; capsule polysaccharide biosynthesis. Functionally, involved in antigen K (capsular polysaccharide) biosynthesis. This chain is Capsular polysaccharide biosynthesis protein RkpI (rkpI), found in Rhizobium meliloti (strain 1021) (Ensifer meliloti).